Reading from the N-terminus, the 561-residue chain is Formate--tetrahydrofolate ligase (561 aa).

Residue 66-73 coordinates ATP; the sequence is TPAGEGKT.

The protein belongs to the formate--tetrahydrofolate ligase family.

It catalyses the reaction (6S)-5,6,7,8-tetrahydrofolate + formate + ATP = (6R)-10-formyltetrahydrofolate + ADP + phosphate. The protein operates within one-carbon metabolism; tetrahydrofolate interconversion. In Methylibium petroleiphilum (strain ATCC BAA-1232 / LMG 22953 / PM1), this protein is Formate--tetrahydrofolate ligase.